We begin with the raw amino-acid sequence, 1461 residues long: Gag-Pro-Pol polyprotein (1461 aa).

A lipid anchor (N-myristoyl glycine; by host) is attached at Gly2. Positions 94-97 match the PTAP/PSAP motif motif; sequence PSAP. The tract at residues 94-121 is disordered; the sequence is PSAPAAPVPTPICPTTTPPPPPPPSPEA. A compositionally biased stretch (pro residues) spans 97–121; sequence PAAPVPTPICPTTTPPPPPPPSPEA. Residues 124-127 carry the PPXY motif motif; that stretch reads PPPY. Residues 130–133 carry the PTAP/PSAP motif motif; sequence PTTT. 2 CCHC-type zinc fingers span residues 361–378 and 384–401; these read QPCF…DCTQ and GPCP…DCPQ. Residues 399–425 form a disordered region; the sequence is CPQLKPPQEEGEPLLLDLPSTSGTTEE. Positions 473-551 constitute a Peptidase A2 domain; it reads TQALLDTGAD…NKWTIIGRDA (79 aa). Asp478 acts as the For protease activity; shared with dimeric partner in catalysis. Residues 612-802 form the Reverse transcriptase domain; it reads LEAGHIEPYS…GQIRFLGQVI (191 aa). Mg(2+) is bound by residues Asp678, Asp753, Asp754, Asp1038, Glu1073, Asp1095, Asp1156, Asp1229, and Asp1286. An RNase H type-1 domain is found at 1029–1164; sequence LDTAPCLFSD…TDSLILAPLV (136 aa). Positions 1218–1387 constitute an Integrase catalytic domain; it reads RGLLPNHIWQ…PPIPEASTPP (170 aa). Positions 1392–1441 form a DNA-binding region, integrase-type; the sequence is KWFYYKLPGLTNQRWKGPLQSLQEAAGAALLSIDGSPRWIPWRFLKKAAC.

Homodimer; the homodimers are part of the immature particles. Interacts with human TSG101 and NEDD4; these interactions are essential for budding and release of viral particles. As to quaternary structure, homodimer; further assembles as homohexamers. It depends on Mg(2+) as a cofactor. Phosphorylation of the matrix protein p19 by MAPK1 seems to play a role in budding. Post-translationally, myristoylated. Myristoylation of the matrix (MA) domain mediates the transport and binding of Gag polyproteins to the host plasma membrane and is required for the assembly of viral particles. In terms of processing, specific enzymatic cleavages by the viral protease yield mature proteins. The polyprotein is cleaved during and after budding, this process is termed maturation. The protease is autoproteolytically processed at its N- and C-termini.

Its subcellular location is the virion. The enzyme catalyses Endonucleolytic cleavage to 5'-phosphomonoester.. The catalysed reaction is DNA(n) + a 2'-deoxyribonucleoside 5'-triphosphate = DNA(n+1) + diphosphate. Functionally, the matrix domain targets Gag, Gag-Pro and Gag-Pro-Pol polyproteins to the plasma membrane via a multipartite membrane binding signal, that includes its myristoylated N-terminus. In terms of biological role, matrix protein. Its function is as follows. Forms the spherical core of the virus that encapsulates the genomic RNA-nucleocapsid complex. Binds strongly to viral nucleic acids and promote their aggregation. Also destabilizes the nucleic acids duplexes via highly structured zinc-binding motifs. Functionally, the aspartyl protease mediates proteolytic cleavages of Gag and Gag-Pol polyproteins during or shortly after the release of the virion from the plasma membrane. Cleavages take place as an ordered, step-wise cascade to yield mature proteins. This process is called maturation. Displays maximal activity during the budding process just prior to particle release from the cell (Potential). Cleaves the translation initiation factor eIF4G leading to the inhibition of host cap-dependent translation. In terms of biological role, RT is a multifunctional enzyme that converts the viral RNA genome into dsDNA in the cytoplasm, shortly after virus entry into the cell. This enzyme displays a DNA polymerase activity that can copy either DNA or RNA templates, and a ribonuclease H (RNase H) activity that cleaves the RNA strand of RNA-DNA heteroduplexes in a partially processive 3' to 5'-endonucleasic mode. Conversion of viral genomic RNA into dsDNA requires many steps. A tRNA-Pro binds to the primer-binding site (PBS) situated at the 5'-end of the viral RNA. RT uses the 3' end of the tRNA primer to perform a short round of RNA-dependent minus-strand DNA synthesis. The reading proceeds through the U5 region and ends after the repeated (R) region which is present at both ends of viral RNA. The portion of the RNA-DNA heteroduplex is digested by the RNase H, resulting in a ssDNA product attached to the tRNA primer. This ssDNA/tRNA hybridizes with the identical R region situated at the 3' end of viral RNA. This template exchange, known as minus-strand DNA strong stop transfer, can be either intra- or intermolecular. RT uses the 3' end of this newly synthesized short ssDNA to perform the RNA-dependent minus-strand DNA synthesis of the whole template. RNase H digests the RNA template except for a polypurine tract (PPT) situated at the 5' end of the genome. It is not clear if both polymerase and RNase H activities are simultaneous. RNase H probably can proceed both in a polymerase-dependent (RNA cut into small fragments by the same RT performing DNA synthesis) and a polymerase-independent mode (cleavage of remaining RNA fragments by free RTs). Secondly, RT performs DNA-directed plus-strand DNA synthesis using the PPT that has not been removed by RNase H as primer. PPT and tRNA primers are then removed by RNase H. The 3' and 5' ssDNA PBS regions hybridize to form a circular dsDNA intermediate. Strand displacement synthesis by RT to the PBS and PPT ends produces a blunt ended, linear dsDNA copy of the viral genome that includes long terminal repeats (LTRs) at both ends. Its function is as follows. Catalyzes viral DNA integration into the host chromosome, by performing a series of DNA cutting and joining reactions. This chain is Gag-Pro-Pol polyprotein (gag-pro-pol), found in Human T-cell leukemia virus 2 (HTLV-2).